Consider the following 1506-residue polypeptide: Gag-Pol polyprotein (1506 aa).

CCHC-type zinc fingers lie at residues 385 to 402 and 404 to 421; these read QKCY…QCRQ and IICH…DCRQ. The Peptidase A2 domain maps to 459 to 530; it reads KKLLVDTGAD…SPVEVLGRDN (72 aa). Aspartate 464 functions as the Protease; shared with dimeric partner in the catalytic mechanism. A Reverse transcriptase domain is found at 587 to 776; sequence EGKVGRAPPH…YPAKWLGFEL (190 aa). Positions 652, 727, 728, 980, 1012, 1032, and 1085 each coordinate Mg(2+). The 123-residue stretch at 971-1093 folds into the RNase H type-1 domain; sequence VVPGPTYYTD…IDRYISEIFL (123 aa). The Integrase-type zinc-finger motif lies at 1228–1269; that stretch reads ENIPLAEEEHNKWHQDAVSLHLEFGIPRTAAEDIVQQCDVCQ. Residues histidine 1237, histidine 1241, cysteine 1265, and cysteine 1268 each contribute to the Zn(2+) site. An Integrase catalytic domain is found at 1270–1430; that stretch reads ENKMPSTLRG…SPMDIFIFNK (161 aa). Mg(2+) is bound by residues aspartate 1291, aspartate 1343, and glutamate 1379. Residues 1447 to 1499 constitute a DNA-binding region (integrase-type); sequence RFCYYRTRKRGHPGEWQGPTQVLWGGDGAIVVKDRGTDRYLVIANKDVKFIPP.

This sequence belongs to the retroviral Pol polyprotein family. As to quaternary structure, homotetramer; further associates as a homohexadecamer. Mg(2+) is required as a cofactor. In terms of processing, specific enzymatic cleavages by the viral protease yield mature proteins.

The protein localises to the virion. The enzyme catalyses Endonucleolytic cleavage to 5'-phosphomonoester.. It carries out the reaction 3'-end directed exonucleolytic cleavage of viral RNA-DNA hybrid.. The catalysed reaction is dUTP + H2O = dUMP + diphosphate + H(+). It catalyses the reaction DNA(n) + a 2'-deoxyribonucleoside 5'-triphosphate = DNA(n+1) + diphosphate. Functionally, mediates, with Gag polyprotein, the essential events in virion assembly, including binding the plasma membrane, making the protein-protein interactions necessary to create spherical particles, recruiting the viral Env proteins, and packaging the genomic RNA via direct interactions with the RNA packaging sequence. Its function is as follows. Targets the polyprotein to the plasma membrane. In terms of biological role, forms the core that encapsulates the genomic RNA-nucleocapsid complex in the virion. Encapsulates and protects viral dimeric unspliced genomic RNA (gRNA). Binds these RNAs through its zinc fingers. Acts as a nucleic acid chaperone which is involved in rearrangement of nucleic acid secondary structure during gRNA retrotranscription. Also facilitates template switch leading to recombination. Functionally, the aspartyl protease mediates proteolytic cleavages of Gag and Gag-Pol polyproteins during or shortly after the release of the virion from the plasma membrane. Cleavages take place as an ordered, step-wise cascade to yield mature proteins. This process is called maturation. Displays maximal activity during the budding process just prior to particle release from the cell. Its function is as follows. RT is a multifunctional enzyme that converts the viral dimeric RNA genome into dsDNA in the cytoplasm, shortly after virus entry into the cell. This enzyme displays a DNA polymerase activity that can copy either DNA or RNA templates, and a ribonuclease H (RNase H) activity that cleaves the RNA strand of RNA-DNA heteroduplexes in a partially processive 3' to 5' endonucleasic mode. Conversion of viral genomic RNA into dsDNA requires many steps. A tRNA-Trp binds to the primer-binding site (PBS) situated at the 5' end of the viral RNA. RT uses the 3' end of the tRNA primer to perfom a short round of RNA-dependent minus-strand DNA synthesis. The reading proceeds through the U5 region and ends after the repeated (R) region which is present at both ends of viral RNA. The portion of the RNA-DNA heteroduplex is digested by the RNase H, resulting in a ssDNA product attached to the tRNA primer. This ssDNA/tRNA hybridizes with the identical R region situated at the 3' end of viral RNA. This template exchange, known as minus-strand DNA strong stop transfer, can be either intra- or intermolecular. RT uses the 3' end of this newly synthesized short ssDNA to perfom the RNA-dependent minus-strand DNA synthesis of the whole template. RNase H digests the RNA template except for a polypurine tract (PPT) situated at the 5' end of the genome. It is not clear if both polymerase and RNase H activities are simultaneous. RNase H probably can proceed both in a polymerase-dependent (RNA cut into small fragments by the same RT performing DNA synthesis) and a polymerase-independent mode (cleavage of remaining RNA fragments by free RTs). Secondly, RT performs DNA-directed plus-strand DNA synthesis using the PPT that has not been removed by RNase H as primers. PPT and tRNA primers are then removed by RNase H. The 3' and 5' ssDNA PBS regions hybridize to form a circular dsDNA intermediate. Strand displacement synthesis by RT to the PBS and PPT ends produces a blunt ended, linear dsDNA copy of the viral genome that includes long terminal repeats (LTRs) at both ends. In terms of biological role, catalyzes viral DNA integration into the host chromosome, by performing a series of DNA cutting and joining reactions. The protein is Gag-Pol polyprotein (pol) of Ovis aries (Sheep).